The chain runs to 740 residues: Ethylene receptor 1 (740 aa).

A run of 3 helical transmembrane segments spans residues 23 to 43 (ISDF…IYFV), 53 to 73 (WVLV…LINL), and 92 to 112 (VLTA…IPDL). Residues Cys65 and His69 each coordinate Cu cation. The 150-residue stretch at 158–307 (DRHTILKTTL…VVADQVAVAL (150 aa)) folds into the GAF domain. The region spanning 350-588 (VMNHEMRTPM…TFIVKLGIAE (239 aa)) is the Histidine kinase domain. Phosphohistidine; by autocatalysis is present on His353. The 118-residue stretch at 614-731 (KVLVMDDNGV…KMRSVLSELI (118 aa)) folds into the Response regulatory domain. Residue Asp662 is modified to 4-aspartylphosphate.

It belongs to the ethylene receptor family. As to quaternary structure, homodimer; disulfide-linked. Requires Cu cation as cofactor. Activation probably requires a transfer of a phosphate group between a His in the transmitter domain and an Asp of the receiver domain.

The protein localises to the endoplasmic reticulum membrane. It catalyses the reaction ATP + protein L-histidine = ADP + protein N-phospho-L-histidine.. May act early in the ethylene signal transduction pathway, possibly as an ethylene receptor, or as a regulator of the pathway. The sequence is that of Ethylene receptor 1 (ETR1) from Cucumis sativus (Cucumber).